Consider the following 332-residue polypeptide: Methionine synthase (332 aa).

Zn(2+) is bound by residues H211, C213, and C296.

The protein belongs to the archaeal MetE family. Zn(2+) serves as cofactor.

It functions in the pathway amino-acid biosynthesis; L-methionine biosynthesis via de novo pathway. Functionally, catalyzes the transfer of a methyl group to L-homocysteine resulting in methionine formation. The physiological methyl donor is unknown. In Saccharolobus solfataricus (strain ATCC 35092 / DSM 1617 / JCM 11322 / P2) (Sulfolobus solfataricus), this protein is Methionine synthase.